The primary structure comprises 219 residues: Thymidylate kinase (219 aa).

10–17 (GLEGAGKT) is an ATP binding site.

The protein belongs to the thymidylate kinase family.

The enzyme catalyses dTMP + ATP = dTDP + ADP. Its function is as follows. Phosphorylation of dTMP to form dTDP in both de novo and salvage pathways of dTTP synthesis. This is Thymidylate kinase from Pectobacterium carotovorum subsp. carotovorum (strain PC1).